The sequence spans 206 residues: uncharacterized protein (206 aa).

This is an uncharacterized protein from Haemophilus influenzae (strain ATCC 51907 / DSM 11121 / KW20 / Rd).